The following is a 551-amino-acid chain: Glutamate--tRNA ligase (551 aa).

The short motif at 100 to 110 is the 'HIGH' region element; sequence PNPNGPPTLGS.

It belongs to the class-I aminoacyl-tRNA synthetase family. Glutamate--tRNA ligase type 2 subfamily.

Its subcellular location is the cytoplasm. The enzyme catalyses tRNA(Glu) + L-glutamate + ATP = L-glutamyl-tRNA(Glu) + AMP + diphosphate. In terms of biological role, catalyzes the attachment of glutamate to tRNA(Glu) in a two-step reaction: glutamate is first activated by ATP to form Glu-AMP and then transferred to the acceptor end of tRNA(Glu). In Archaeoglobus fulgidus (strain ATCC 49558 / DSM 4304 / JCM 9628 / NBRC 100126 / VC-16), this protein is Glutamate--tRNA ligase.